Consider the following 151-residue polypeptide: UPF0208 membrane protein YfbV (151 aa).

The next 2 helical transmembrane spans lie at 46 to 65 (YAIR…QIAL) and 69 to 91 (LGPA…WWLG).

Belongs to the UPF0208 family.

It localises to the cell inner membrane. The protein is UPF0208 membrane protein YfbV of Shigella flexneri serotype 5b (strain 8401).